The primary structure comprises 490 residues: Aspartyl/glutamyl-tRNA(Asn/Gln) amidotransferase subunit B (490 aa).

It belongs to the GatB/GatE family. GatB subfamily. In terms of assembly, heterotrimer of A, B and C subunits.

It catalyses the reaction L-glutamyl-tRNA(Gln) + L-glutamine + ATP + H2O = L-glutaminyl-tRNA(Gln) + L-glutamate + ADP + phosphate + H(+). The catalysed reaction is L-aspartyl-tRNA(Asn) + L-glutamine + ATP + H2O = L-asparaginyl-tRNA(Asn) + L-glutamate + ADP + phosphate + 2 H(+). Allows the formation of correctly charged Asn-tRNA(Asn) or Gln-tRNA(Gln) through the transamidation of misacylated Asp-tRNA(Asn) or Glu-tRNA(Gln) in organisms which lack either or both of asparaginyl-tRNA or glutaminyl-tRNA synthetases. The reaction takes place in the presence of glutamine and ATP through an activated phospho-Asp-tRNA(Asn) or phospho-Glu-tRNA(Gln). This is Aspartyl/glutamyl-tRNA(Asn/Gln) amidotransferase subunit B from Zymomonas mobilis subsp. mobilis (strain ATCC 31821 / ZM4 / CP4).